The sequence spans 209 residues: Ribosomal RNA large subunit methyltransferase E (209 aa).

Positions 63, 65, 83, 99, and 124 each coordinate S-adenosyl-L-methionine. Lys-164 functions as the Proton acceptor in the catalytic mechanism.

The protein belongs to the class I-like SAM-binding methyltransferase superfamily. RNA methyltransferase RlmE family.

Its subcellular location is the cytoplasm. It catalyses the reaction uridine(2552) in 23S rRNA + S-adenosyl-L-methionine = 2'-O-methyluridine(2552) in 23S rRNA + S-adenosyl-L-homocysteine + H(+). Specifically methylates the uridine in position 2552 of 23S rRNA at the 2'-O position of the ribose in the fully assembled 50S ribosomal subunit. In Colwellia psychrerythraea (strain 34H / ATCC BAA-681) (Vibrio psychroerythus), this protein is Ribosomal RNA large subunit methyltransferase E.